The following is a 432-amino-acid chain: MEIVYVEIVDVRAREVLDSRGNPTVEAEVVLEDGTVGRAIVPSGASTGKFEALEIRDKDKKRYHGKGVLKAVENVNETIAPALIGMNAFDQPLVDKTLIELDGTENKSKLGANAILAVSMAVARAAANYLGLPMYKYLGGVNAKVLPVPLMNVINGGQHADNNLDLQEFMIVPAGFDSFKEALRAGAEIFHTLKKILHDSGHVTAVGDEGGFAPNLSSNEEAIKILIEAIEEAGYKPSEQVFIALDCAASSFYDEEKGVYFVDGEEKSSEVLMGYYEELIAKYPIISIEDPFAEEDWDAFVEFTKRVGNKVQIVGDDLYVTNVKRLSKGIELKATNSILIKLNQIGTVTETLDAVELAQKNNMTAIISHRSGESEDTFIADLAVATNAGFIKTGSLSRSERIAKYNQLLRIEEELGKVAEFRGLSSFYSIKR.

Gln-167 is a (2R)-2-phosphoglycerate binding site. The active-site Proton donor is the Glu-209. Asp-246, Glu-289, and Asp-316 together coordinate Mg(2+). Lys-341, Arg-370, Ser-371, and Lys-392 together coordinate (2R)-2-phosphoglycerate. The active-site Proton acceptor is the Lys-341.

Belongs to the enolase family. Mg(2+) is required as a cofactor.

It is found in the cytoplasm. It localises to the secreted. Its subcellular location is the cell surface. It carries out the reaction (2R)-2-phosphoglycerate = phosphoenolpyruvate + H2O. The protein operates within carbohydrate degradation; glycolysis; pyruvate from D-glyceraldehyde 3-phosphate: step 4/5. Functionally, catalyzes the reversible conversion of 2-phosphoglycerate (2-PG) into phosphoenolpyruvate (PEP). It is essential for the degradation of carbohydrates via glycolysis. This Thermotoga neapolitana (strain ATCC 49049 / DSM 4359 / NBRC 107923 / NS-E) protein is Enolase.